Consider the following 276-residue polypeptide: Ribosomal RNA small subunit methyltransferase A (276 aa).

Residues Asn27, Leu29, Gly54, Glu75, Asp101, and Asn122 each contribute to the S-adenosyl-L-methionine site.

It belongs to the class I-like SAM-binding methyltransferase superfamily. rRNA adenine N(6)-methyltransferase family. RsmA subfamily.

Its subcellular location is the cytoplasm. The enzyme catalyses adenosine(1518)/adenosine(1519) in 16S rRNA + 4 S-adenosyl-L-methionine = N(6)-dimethyladenosine(1518)/N(6)-dimethyladenosine(1519) in 16S rRNA + 4 S-adenosyl-L-homocysteine + 4 H(+). Specifically dimethylates two adjacent adenosines (A1518 and A1519) in the loop of a conserved hairpin near the 3'-end of 16S rRNA in the 30S particle. May play a critical role in biogenesis of 30S subunits. In Brucella abortus biovar 1 (strain 9-941), this protein is Ribosomal RNA small subunit methyltransferase A.